We begin with the raw amino-acid sequence, 316 residues long: Cytochrome c oxidase assembly protein COX18, mitochondrial (316 aa).

Residues 164 to 184 (WKNALLPMVQIPLWVTVSMGI) form a helical membrane-spanning segment. The Mitochondrial matrix portion of the chain corresponds to 185 to 213 (RTLTETQLIESFYPSWFSALGFSSFDLSS). A helical transmembrane segment spans residues 214–234 (PLVAMPLLAPILVGTLAVLNV). Residues 235–274 (ELNGRLMFSSSLSSQGIKTISRNSTRVQEAMTSILNVSRL) are Mitochondrial intermembrane-facing. A helical membrane pass occupies residues 275 to 295 (GCVVMLAMSSQAPFLLSLYWI). Topologically, residues 296–316 (SSQLFSLVQNIILNWIYPYQR) are mitochondrial matrix.

It belongs to the OXA1/ALB3/YidC family. In terms of assembly, interacts with PNT1 and MSS2.

The protein localises to the mitochondrion inner membrane. Functionally, required for the insertion of integral membrane proteins into the mitochondrial inner membrane. Essential for the activity and assembly of cytochrome c oxidase. Plays a central role in the translocation and export of the C-terminal part of the COX2 protein into the mitochondrial intermembrane space. The sequence is that of Cytochrome c oxidase assembly protein COX18, mitochondrial (COX18) from Saccharomyces cerevisiae (strain ATCC 204508 / S288c) (Baker's yeast).